The chain runs to 94 residues: Small ribosomal subunit protein uS19c (94 aa).

This sequence belongs to the universal ribosomal protein uS19 family.

Its subcellular location is the plastid. It localises to the chloroplast. Functionally, protein S19 forms a complex with S13 that binds strongly to the 16S ribosomal RNA. The protein is Small ribosomal subunit protein uS19c (rps19) of Euglena gracilis.